Reading from the N-terminus, the 438-residue chain is Actin-like protein 7A (438 aa).

Positions 36-56 are required for interaction with TES; sequence ASLKDGPAKRAVWVRRDHSEP.

This sequence belongs to the actin family. Interacts (via N-terminus) with TES (via LIM domain 2). Heterodimer with TES; the heterodimer interacts with ENAH to form a heterotrimer. Interacts with ACTL9. Interacts with CYLC1; the interaction may be relevant for proper acrosome attachment to the nuclear envelope.

The protein localises to the cytoplasm. It localises to the cytoskeleton. It is found in the golgi apparatus. Its subcellular location is the nucleus. Essential for normal spermatogenesis and male fertility. Required for normal sperm head morphology, acroplaxome formation, acrosome attachment, and acrosome granule stability. May anchor and stabilize acrosomal adherence to the acroplaxome at least in part by facilitating the presence of F-actin in the subacrosomal space. May play an important role in formation and fusion of Golgi-derived vesicles during acrosome biogenesis. This is Actin-like protein 7A (ACTL7A) from Bos taurus (Bovine).